We begin with the raw amino-acid sequence, 248 residues long: 1-(5-phosphoribosyl)-5-[(5-phosphoribosylamino)methylideneamino] imidazole-4-carboxamide isomerase (248 aa).

The active-site Proton acceptor is Asp-8. Asp-131 (proton donor) is an active-site residue.

This sequence belongs to the HisA/HisF family.

It is found in the cytoplasm. It catalyses the reaction 1-(5-phospho-beta-D-ribosyl)-5-[(5-phospho-beta-D-ribosylamino)methylideneamino]imidazole-4-carboxamide = 5-[(5-phospho-1-deoxy-D-ribulos-1-ylimino)methylamino]-1-(5-phospho-beta-D-ribosyl)imidazole-4-carboxamide. It participates in amino-acid biosynthesis; L-histidine biosynthesis; L-histidine from 5-phospho-alpha-D-ribose 1-diphosphate: step 4/9. This chain is 1-(5-phosphoribosyl)-5-[(5-phosphoribosylamino)methylideneamino] imidazole-4-carboxamide isomerase, found in Cupriavidus pinatubonensis (strain JMP 134 / LMG 1197) (Cupriavidus necator (strain JMP 134)).